Consider the following 443-residue polypeptide: Phosphoglucosamine mutase (443 aa).

Ser101 serves as the catalytic Phosphoserine intermediate. Mg(2+)-binding residues include Ser101, Asp239, Asp241, and Asp243. Position 101 is a phosphoserine (Ser101).

The protein belongs to the phosphohexose mutase family. Mg(2+) is required as a cofactor. Post-translationally, activated by phosphorylation.

It catalyses the reaction alpha-D-glucosamine 1-phosphate = D-glucosamine 6-phosphate. Its function is as follows. Catalyzes the conversion of glucosamine-6-phosphate to glucosamine-1-phosphate. The sequence is that of Phosphoglucosamine mutase from Francisella tularensis subsp. tularensis (strain WY96-3418).